We begin with the raw amino-acid sequence, 55 residues long: KSIQGLSASPGDLSALHGKEAEMHVLQMIQDGQIHALINQKDGMVRFLEDPEQYK.

The region spanning 1–52 is the PCI domain; that stretch reads KSIQGLSASPGDLSALHGKEAEMHVLQMIQDGQIHALINQKDGMVRFLEDPE.

Belongs to the CSN3 family. In terms of assembly, component of the CSN complex, probably composed of CSN1, CSN2, CSN3, CSN4, CSN5 (CSN5A or CSN5B), CSN6 (CSN6A or CSN6B), CSN7 and CSN8.

It is found in the cytoplasm. The protein resides in the nucleus. Functionally, component of the COP9 signalosome complex (CSN), a complex involved in various cellular and developmental processes such as photomorphogenesis and auxin and jasmonate responses. The CSN complex is an essential regulator of the ubiquitin (Ubl) conjugation pathway by mediating the deneddylation of the cullin subunits of SCF-type E3 ligase complexes, leading to decrease the Ubl ligase activity of SCF. It is involved in repression of photomorphogenesis in darkness by regulating the activity of COP1-containing Ubl ligase complexes. The chain is COP9 signalosome complex subunit 3 (CSN3) from Brassica oleracea (Wild cabbage).